The sequence spans 541 residues: Cyclin-T1-4 (541 aa).

The segment at 277-366 (VSEVESSVGG…KSRSGVEAPG (90 aa)) is disordered. The span at 307 to 325 (SDNLGGSTKATQNRSNDNG) shows a compositional bias: polar residues. Positions 336–354 (QKGERDTETKDSMHTESHP) are enriched in basic and acidic residues. Position 396 is a phosphoserine (Ser396). The disordered stretch occupies residues 445 to 541 (EDDKDIQNKS…REPRRHSQER (97 aa)). The segment covering 493 to 511 (MESPCEKQLGEGKRRHDNS) has biased composition (basic and acidic residues). Over residues 519-528 (KTNPGGSSHS) the composition is skewed to polar residues. Residues 529 to 541 (YGDREPRRHSQER) show a composition bias toward basic and acidic residues.

The protein belongs to the cyclin family. Cyclin T subfamily.

The chain is Cyclin-T1-4 (CYCT1-4) from Arabidopsis thaliana (Mouse-ear cress).